Consider the following 603-residue polypeptide: Serine/threonine-protein kinase HAL4/SAT4 (603 aa).

Polar residues-rich tracts occupy residues 1–15, 30–60, and 68–85; these read MTGMNDNNAAIPQQT, RSGSRSSRQGKASSNIQPPSNINTNVPSASK, and TPTTATPRVVSNPSNTAG. 3 disordered regions span residues 1–86, 150–171, and 267–301; these read MTGM…TAGV, LSPKFSHHSNSNTAITPAPTPT, and DKYPEGAPTSGALNCPERDIYRSDQKDSKNNTHNI. Residues 159 to 171 are compositionally biased toward low complexity; sequence NSNTAITPAPTPT. A compositionally biased stretch (basic and acidic residues) spans 282–296; that stretch reads PERDIYRSDQKDSKN. The 275-residue stretch at 316–590 folds into the Protein kinase domain; that stretch reads GRCQEVLGKG…GKQILNSEWG (275 aa). Residues 322 to 330 and Lys353 contribute to the ATP site; that span reads LGKGAFGVV. Catalysis depends on Asp449, which acts as the Proton acceptor.

Belongs to the protein kinase superfamily. Ser/Thr protein kinase family.

It carries out the reaction L-seryl-[protein] + ATP = O-phospho-L-seryl-[protein] + ADP + H(+). The enzyme catalyses L-threonyl-[protein] + ATP = O-phospho-L-threonyl-[protein] + ADP + H(+). Functionally, promotes K(+) uptake, by the potassium transporter TRK1-TRK2, which leads to the subsequent cellular resistance to toxic cations such as Na(+), Li(+) and Ca(2+). The sequence is that of Serine/threonine-protein kinase HAL4/SAT4 (SAT4) from Saccharomyces cerevisiae (strain ATCC 204508 / S288c) (Baker's yeast).